The sequence spans 615 residues: Homologous recombination OB-fold protein (615 aa).

Disordered regions lie at residues 42-75 (LRPV…PRLC), 213-326 (PWPS…PVTQ), and 546-590 (DFLE…FPEE). The residue at position 47 (S47) is a Phosphoserine. Polar residues-rich tracts occupy residues 47-71 (SRPQ…NQSV), 232-241 (SCVSTSQQRG), and 257-275 (IRSS…SPRA). Positions 302–317 (SSRAPVSSVESPVSTP) are enriched in low complexity.

Interacts with MCM8; this interaction is necessary for MCM8-MCM9 helicase complex recruitment to DNA damage sites. Interacts with RPA1; this interaction associates HROB with the RPA complex.

It is found in the nucleus. Its subcellular location is the chromosome. In terms of biological role, DNA-binding protein involved in homologous recombination that acts by recruiting the MCM8-MCM9 helicase complex to sites of DNA damage to promote DNA repair synthesis. This is Homologous recombination OB-fold protein from Mus musculus (Mouse).